The sequence spans 1293 residues: Receptor-type tyrosine-protein phosphatase C (1293 aa).

Residues 1–25 (MTMGLWLKLLAFGFALLDTEVFVTG) form the signal peptide. Residues 26–566 (QTPTPSDELS…RNESTNFNAK (541 aa)) are Extracellular-facing. Positions 43–174 (LPQSDPLPAR…STTDISSGAS (132 aa)) are disordered. 3 stretches are compositionally biased toward polar residues: residues 53–72 (TTESTPPSISERGNGSSETT), 88–110 (QPDSQTPSAGGADTQTFSSQADN), and 149–169 (LARNSSAASPTHTSNVSTTDI). A glycan (N-linked (GlcNAc...) asparagine) is linked at N66. N-linked (GlcNAc...) asparagine glycans are attached at residues N152, N163, N209, N213, N220, N255, N260, N292, N313, N324, N349, N418, N429, N459, and N491. Fibronectin type-III domains are found at residues 376-472 (IPET…TKAD) and 473-568 (RPDK…AKAL). A helical transmembrane segment spans residues 567–588 (ALIIFLVFLIIVTSIALLVVLY). Residues 589 to 1293 (KIYDLRKKRS…SASPAPTQSS (705 aa)) are Cytoplasmic-facing. 2 consecutive Tyrosine-protein phosphatase domains span residues 642–901 (FLAE…LVEY) and 933–1216 (LEAE…IASI). Y672 carries the phosphotyrosine modification. Substrate-binding positions include D810, 842–848 (CSAGVGR), and Q886. Residue C842 is the Phosphocysteine intermediate of the active site. Phosphoserine occurs at positions 964, 983, 986, 990, 993, 994, and 998. The interval 980 to 1003 (LEMSKESEPESDESSDDDSDSEET) is disordered. A compositionally biased stretch (acidic residues) spans 988 to 1001 (PESDESSDDDSDSE). Residue C1157 is the Phosphocysteine intermediate of the active site. Position 1229 is a phosphoserine (S1229). The segment at 1240-1293 (DGGKQDANCVRPDGPLNKAQEDSRGVGTPEPTNSAEEPEHAANGSASPAPTQSS) is disordered. Residue T1267 is modified to Phosphothreonine. A compositionally biased stretch (polar residues) spans 1283–1293 (GSASPAPTQSS). S1286 is subject to Phosphoserine.

Belongs to the protein-tyrosine phosphatase family. Receptor class 1/6 subfamily. In terms of assembly, interacts with SKAP1. Interacts with DPP4; the interaction is enhanced in an interleukin-12-dependent manner in activated lymphocytes. Binds GANAB and PRKCSH. Interacts with CD53; this interaction stabilizes PTPRC on the membrane and is required for optimal phosphatase activity. Interacts with CLEC10A. Heavily N- and O-glycosylated.

The protein resides in the cell membrane. It localises to the membrane raft. The protein localises to the synapse. The catalysed reaction is O-phospho-L-tyrosyl-[protein] + H2O = L-tyrosyl-[protein] + phosphate. In terms of biological role, protein tyrosine-protein phosphatase required for T-cell activation through the antigen receptor. Acts as a positive regulator of T-cell coactivation upon binding to DPP4. The first PTPase domain has enzymatic activity, while the second one seems to affect the substrate specificity of the first one. Upon T-cell activation, recruits and dephosphorylates SKAP1 and FYN. Dephosphorylates LYN, and thereby modulates LYN activity. Interacts with CLEC10A at antigen presenting cell-T cell contact; CLEC10A on immature dendritic cells recognizes Tn antigen-carrying PTPRC/CD45 receptor on effector T cells and modulates T cell activation threshold to limit autoreactivity. The sequence is that of Receptor-type tyrosine-protein phosphatase C from Mus musculus (Mouse).